A 142-amino-acid chain; its full sequence is Large ribosomal subunit protein uL13 (142 aa).

It belongs to the universal ribosomal protein uL13 family. Part of the 50S ribosomal subunit.

This protein is one of the early assembly proteins of the 50S ribosomal subunit, although it is not seen to bind rRNA by itself. It is important during the early stages of 50S assembly. In Vibrio campbellii (strain ATCC BAA-1116), this protein is Large ribosomal subunit protein uL13.